Consider the following 448-residue polypeptide: MRYLPLTENDRREMLGVIGAKSVDELFRDVPERARREGLVDLPRRQGELEVERMLGRMAAKNTPAASVPFFVGAGAYRHHVPAAVDHLIQRSEFLTSYTPYQPEITQGTLQYLFEFQTQVAMITGMEVANASMYDGATGCGEAVLMAHRVTKRRKAVLSGTLHPQYAAVVQNLSDFADYELEVMPPALPGQAEDILAHIHDDISCVVVQTPGFFGELHDLRPIAEAAHAKGALLIAVVPEILSLGAVTPPGEMGADIVVGEGQSIGNGLNFGGPYVGLFATREKYMRQMPGRLCGETVDADGNRGFVLTLSTREQHIRREKATSNICTNSGLCCLAFTIHMSLLGEEGYKRLARINHAAAVKLAERLAKVPGVEILNQAFFNEFTMRLPKPAAEVVDALVDKGVIGGLPASRLLPGVAEVEDLLIVASTEINTEADRAAYEAALKEVL.

It belongs to the GcvP family. N-terminal subunit subfamily. The glycine cleavage system is composed of four proteins: P, T, L and H. In this organism, the P 'protein' is a heterodimer of two subunits.

The catalysed reaction is N(6)-[(R)-lipoyl]-L-lysyl-[glycine-cleavage complex H protein] + glycine + H(+) = N(6)-[(R)-S(8)-aminomethyldihydrolipoyl]-L-lysyl-[glycine-cleavage complex H protein] + CO2. Functionally, the glycine cleavage system catalyzes the degradation of glycine. The P protein binds the alpha-amino group of glycine through its pyridoxal phosphate cofactor; CO(2) is released and the remaining methylamine moiety is then transferred to the lipoamide cofactor of the H protein. This is Probable glycine dehydrogenase (decarboxylating) subunit 1 from Parvibaculum lavamentivorans (strain DS-1 / DSM 13023 / NCIMB 13966).